A 341-amino-acid polypeptide reads, in one-letter code: Anthranilate phosphoribosyltransferase (341 aa).

5-phospho-alpha-D-ribose 1-diphosphate-binding positions include glycine 81, 84–85, 91–94, 109–117, and serine 121; these read GD, NVST, and KHGNRSVSS. Residue glycine 81 participates in anthranilate binding. A Mg(2+)-binding site is contributed by serine 93. Asparagine 112 contacts anthranilate. Residue arginine 167 coordinates anthranilate. Mg(2+)-binding residues include aspartate 226 and glutamate 227.

This sequence belongs to the anthranilate phosphoribosyltransferase family. Homodimer. Mg(2+) serves as cofactor.

It catalyses the reaction N-(5-phospho-beta-D-ribosyl)anthranilate + diphosphate = 5-phospho-alpha-D-ribose 1-diphosphate + anthranilate. Its pathway is amino-acid biosynthesis; L-tryptophan biosynthesis; L-tryptophan from chorismate: step 2/5. Catalyzes the transfer of the phosphoribosyl group of 5-phosphorylribose-1-pyrophosphate (PRPP) to anthranilate to yield N-(5'-phosphoribosyl)-anthranilate (PRA). The polypeptide is Anthranilate phosphoribosyltransferase (Teredinibacter turnerae (strain ATCC 39867 / T7901)).